An 83-amino-acid polypeptide reads, in one-letter code: FMRFamide-like neuropeptide 23 (83 aa).

The first 24 residues, 1–24 (MLLPKISILLYILVVLQETAAVRG), serve as a signal peptide directing secretion. The propeptide occupies 25–36 (ALFRSGRAVPFE). F47 carries the phenylalanine amide modification. The propeptide occupies 50–83 (AGMASGVGGGSEGGPDDVKNSYIRVNGEPEIVYQ).

The protein belongs to the FARP (FMRFamide related peptide) family. As to expression, each flp gene is expressed in a distinct set of neurons.

It is found in the secreted. Its function is as follows. FMRFamides and FMRFamide-like peptides are neuropeptides. This is FMRFamide-like neuropeptide 23 (flp-23) from Caenorhabditis elegans.